Reading from the N-terminus, the 217-residue chain is Dual specificity phosphatase 29 (217 aa).

Residues 46–194 (HVNEVWPNLY…LRELDIKLAL (149 aa)) form the Tyrosine-protein phosphatase domain. 138–145 (HCAMGRSR) serves as a coordination point for substrate. The active-site Phosphocysteine intermediate is the Cys139.

It belongs to the protein-tyrosine phosphatase family. Non-receptor class dual specificity subfamily.

It is found in the cytoplasm. It localises to the nucleus. The catalysed reaction is O-phospho-L-tyrosyl-[protein] + H2O = L-tyrosyl-[protein] + phosphate. It catalyses the reaction O-phospho-L-seryl-[protein] + H2O = L-seryl-[protein] + phosphate. It carries out the reaction O-phospho-L-threonyl-[protein] + H2O = L-threonyl-[protein] + phosphate. Functionally, dual specificity phosphatase able to dephosphorylate phosphotyrosine, phosphoserine and phosphothreonine residues within the same substrate, with a preference for phosphotyrosine as a substrate. Involved in the modulation of AMPK and MAPK1/2 signaling pathways. In Anolis carolinensis (Green anole), this protein is Dual specificity phosphatase 29 (DUSP29).